A 162-amino-acid polypeptide reads, in one-letter code: Ribonuclease P protein component (162 aa).

The interval 1–62 (MDEKDLATQP…GPPKAGGRLL (62 aa)) is disordered. Basic and acidic residues predominate over residues 21–36 (GPHEDPRRQERAEAQA).

It belongs to the RnpA family. As to quaternary structure, consists of a catalytic RNA component (M1 or rnpB) and a protein subunit.

It catalyses the reaction Endonucleolytic cleavage of RNA, removing 5'-extranucleotides from tRNA precursor.. Its function is as follows. RNaseP catalyzes the removal of the 5'-leader sequence from pre-tRNA to produce the mature 5'-terminus. It can also cleave other RNA substrates such as 4.5S RNA. The protein component plays an auxiliary but essential role in vivo by binding to the 5'-leader sequence and broadening the substrate specificity of the ribozyme. The protein is Ribonuclease P protein component of Thermus aquaticus.